The primary structure comprises 506 residues: Tabersonine 3-oxygenase (506 aa).

The Lumenal portion of the chain corresponds to 1–5; the sequence is MEFHE. The helical transmembrane segment at 6-26 threads the bilayer; that stretch reads SSPFVFITRGFIFIAISIAVL. Over 27–506 the chain is Cytoplasmic; sequence RRIISKKTKT…DLQLIATSYA (480 aa). C450 is a binding site for heme.

The protein belongs to the cytochrome P450 family. Heme is required as a cofactor. As to expression, expressed in leaf epidermis.

Its subcellular location is the endoplasmic reticulum membrane. The enzyme catalyses 16-methoxytabersonine + reduced [NADPH--hemoprotein reductase] + O2 = (3R)-1,2-didehydro-3-hydroxy-16-methoxy-2,3-dihydrotabersonine + oxidized [NADPH--hemoprotein reductase] + H2O + H(+). The catalysed reaction is (-)-tabersonine + reduced [NADPH--hemoprotein reductase] + O2 = (3R)-1,2-didehydro-3-hydroxy-2,3-dihydrotabersonine + oxidized [NADPH--hemoprotein reductase] + H2O + H(+). The protein operates within alkaloid biosynthesis; vindoline biosynthesis. In terms of biological role, cytochrome P450 catalyzing the monooxygenation of 16-methoxytabersonine, 16-hydroxytabersonine and tabersonine, but not of 2,3-dihydrotabersonine. Converts the C2,C3 alkene of tabersonine and 16-methoxytabersonine to the epoxides, which then spontaneously open to form the corresponding imine alcohols. Inactive in converting amyrin to ursolic acid. The chain is Tabersonine 3-oxygenase from Catharanthus roseus (Madagascar periwinkle).